A 280-amino-acid chain; its full sequence is Golgi phosphoprotein 3-like B (280 aa).

Residues 1–32 form a disordered region; it reads MTTLIRRGRRAEEGQERRADSEDSIKDKDEED. Over residues 10–32 the composition is skewed to basic and acidic residues; it reads RAEEGQERRADSEDSIKDKDEED. Tryptophan 62, arginine 71, arginine 152, and arginine 155 together coordinate a 1,2-diacyl-sn-glycero-3-phospho-(1D-myo-inositol 4-phosphate). The segment at 171 to 182 is beta-hairpin required for oligomerization; sequence EKQNFLLFDMTT.

The protein belongs to the GOLPH3/VPS74 family. Homooligomer.

It is found in the golgi apparatus. The protein resides in the golgi stack membrane. It localises to the trans-Golgi network membrane. Functionally, phosphatidylinositol-4-phosphate-binding protein that may play a role in the process of vesicle budding at the Golgi and anterograde transport to the plasma membrane. This chain is Golgi phosphoprotein 3-like B (golph3l-b), found in Xenopus laevis (African clawed frog).